The chain runs to 225 residues: Claudin-17 (225 aa).

The Cytoplasmic portion of the chain corresponds to 1–7 (MAFYPLQ). The helical transmembrane segment at 8–28 (IAGLVLGFLGMVGTLATTLLP) threads the bilayer. At 29–81 (QWRVSAFIGSNIIVFERIWEGLWMNCVRQAKARLQCKFYSSMLALSPALEAAR) the chain is on the extracellular side. Residues 82–102 (ALMCVAVALSLIALIIGICGM) traverse the membrane as a helical segment. Topologically, residues 103–124 (KKIQCTGSNERAKAYLLGTSGV) are cytoplasmic. Residues 125–145 (LFILTGIFVLIPVCWTANIII) form a helical membrane-spanning segment. Topologically, residues 146–164 (RDFYNPAVHVGQKRELGAA) are extracellular. A helical transmembrane segment spans residues 165 to 185 (LFLGWASVAVLFIAGGLLCGF). Residues 186–225 (CCCNRKKQRDGYPAPRPSMPRTDERRRNMTRQSETPTSYV) are Cytoplasmic-facing. A disordered region spans residues 194-225 (RDGYPAPRPSMPRTDERRRNMTRQSETPTSYV). The segment covering 215–225 (TRQSETPTSYV) has biased composition (polar residues).

Belongs to the claudin family. As to quaternary structure, does not form homotypic polymeric strands and it is not sufficient to form tight junctions by its own. Interacts with OCLN.

The protein resides in the cell junction. It localises to the tight junction. It is found in the cell membrane. The catalysed reaction is chloride(in) = chloride(out). It catalyses the reaction hydrogencarbonate(in) = hydrogencarbonate(out). The enzyme catalyses bromide(in) = bromide(out). It carries out the reaction iodide(out) = iodide(in). The catalysed reaction is fluoride(in) = fluoride(out). It catalyses the reaction nitrate(in) = nitrate(out). The enzyme catalyses thiocyanate(in) = thiocyanate(out). Its function is as follows. Channel-forming tight junction protein with selectivity for anions, including chloride and hydrogencarbonate, and for solutes smaller than 9 Angstrom in diameter. In the kidney proximal tubule, may be involved in quantitative reabsorption of filtered anions. Does not affect water permeability. This chain is Claudin-17 (CLDN17), found in Sus scrofa (Pig).